Reading from the N-terminus, the 122-residue chain is Large ribosomal subunit protein uL14c (122 aa).

It belongs to the universal ribosomal protein uL14 family. Part of the 50S ribosomal subunit.

The protein localises to the plastid. It is found in the chloroplast. Its function is as follows. Binds to 23S rRNA. The sequence is that of Large ribosomal subunit protein uL14c from Vitis vinifera (Grape).